The chain runs to 284 residues: MQLIEKAPAKINLGLDTPYHHQDGAEEWNMVMTSVDLADYVEIQTLTKHKRIRVASDSGFLPNDQRNLAFQAAHLLQTNYGIDEGVNIRIKKNIPVAAGLGGGSSDAAAVLRGLNQLWSLGLSWQELAELGLQIDSDVPYCVYGRTAHVRGRGERITPLSKLPAAWVVLAKPKVSVSTPSILQQIQYDHLEHPDIDGLLRAIREQDIQGMCAVMGNALEPLTAHRYPEITQIKQQMMKFGADAAQMSGTGPTVFGLCSKQSRAQRVFNGMKGFCREVYLVRPLP.

K10 is an active-site residue. An ATP-binding site is contributed by 95-105 (PVAAGLGGGSS). The active site involves D137.

Belongs to the GHMP kinase family. IspE subfamily.

The enzyme catalyses 4-CDP-2-C-methyl-D-erythritol + ATP = 4-CDP-2-C-methyl-D-erythritol 2-phosphate + ADP + H(+). Its pathway is isoprenoid biosynthesis; isopentenyl diphosphate biosynthesis via DXP pathway; isopentenyl diphosphate from 1-deoxy-D-xylulose 5-phosphate: step 3/6. Functionally, catalyzes the phosphorylation of the position 2 hydroxy group of 4-diphosphocytidyl-2C-methyl-D-erythritol. The chain is 4-diphosphocytidyl-2-C-methyl-D-erythritol kinase from Levilactobacillus brevis (strain ATCC 367 / BCRC 12310 / CIP 105137 / JCM 1170 / LMG 11437 / NCIMB 947 / NCTC 947) (Lactobacillus brevis).